The following is a 127-amino-acid chain: Large ribosomal subunit protein bL20 (127 aa).

Belongs to the bacterial ribosomal protein bL20 family.

Its function is as follows. Binds directly to 23S ribosomal RNA and is necessary for the in vitro assembly process of the 50S ribosomal subunit. It is not involved in the protein synthesizing functions of that subunit. This Corynebacterium jeikeium (strain K411) protein is Large ribosomal subunit protein bL20.